We begin with the raw amino-acid sequence, 232 residues long: Flagellar L-ring protein (232 aa).

The first 15 residues, 1–15 (MKKVLFYVLPFAFFG), serve as a signal peptide directing secretion. The N-palmitoyl cysteine moiety is linked to residue Cys16. The S-diacylglycerol cysteine moiety is linked to residue Cys16.

Belongs to the FlgH family. The basal body constitutes a major portion of the flagellar organelle and consists of four rings (L,P,S, and M) mounted on a central rod.

The protein localises to the cell outer membrane. The protein resides in the bacterial flagellum basal body. Assembles around the rod to form the L-ring and probably protects the motor/basal body from shearing forces during rotation. The chain is Flagellar L-ring protein from Campylobacter jejuni subsp. doylei (strain ATCC BAA-1458 / RM4099 / 269.97).